A 700-amino-acid chain; its full sequence is MRMKRIHILFVVIFLLCLRYGYSIKKKRSPNNKNRLFINKRLKYINSKIISRRKENYVKMKMTENKVKGKDIIYGNECRNELLKGILTVSDVVKLTLGPRGRNVLLEKEYGSPLIINDGVTIAKNISLKDRKKNNGVKLMQESTNISNDKAGDGTSSTALMTATITKKGIEQVNRNHNPIPIQRGIQLASKMIIEKIKSLSTPIKTYKDILNIATIASNNDVHMGQIIANAYDKLGKNAAIILDDNADINDKLEFTEGYNFDRGIINPYLLYNENKDYIEYSNVSTLITDQNIDNIQSILPILEIFAKNKQPLCIIADDFSNEVLQTLIINKLKGAIKVLCIVTNSKYISADVGLDLNNLHNNMSSFDNNYLSLLGSANTLIVKKDRTSLITKEEYKKEIDERINVLKKEYEETTSKYDKEKLNERIAALSGGIAKILIGGNSETEQKERKFKYEDATNAVKSAIDIGYVPGGGVTYLEIIKSNFIQEIHKKIEEDLQISSNNDEKKYLELIGNLESEMELQKMGANIVVSSLDVITKQIADNAGVNGDNVVKIILNSKDKYGFGYDVNTNKFVNMVEKGIIDSTNVIISVIKNSCSIASMVLTTECMMVDHEKKDKGILDSSINSPNYLSKHRRTYKHKLHDDEDTDEDDEEDEDDEDDEDDLDDDDYDDEDEEDEEDEEDEDDEDDEDSMNDEYNYDE.

Residues 1–9 (MRMKRIHIL) constitute a mitochondrion transit peptide. The segment at 636–700 (TYKHKLHDDE…SMNDEYNYDE (65 aa)) is disordered. Acidic residues predominate over residues 644 to 700 (DEDTDEDDEEDEDDEDDEDDLDDDDYDDEDEEDEEDEEDEDDEDDEDSMNDEYNYDE).

Belongs to the chaperonin (HSP60) family.

The protein resides in the mitochondrion matrix. Its function is as follows. Implicated in mitochondrial protein import and macromolecular assembly. May facilitate the correct folding of imported proteins. May also prevent misfolding and promote the refolding and proper assembly of unfolded polypeptides generated under stress conditions in the mitochondrial matrix. The polypeptide is Chaperonin CPN60, mitochondrial (Plasmodium falciparum (isolate FCR-3 / Gambia)).